An 838-amino-acid chain; its full sequence is AP-4 complex subunit beta (838 aa).

Residues 582 to 673 (NSSKQTTSIN…NQNNNQNNNQ (92 aa)) are hinge. The tract at residues 648-683 (ITDGNQNNNQNNNQNNNQNNNQNNNQNNQNNNNQNN) is disordered. The span at 652-683 (NQNNNQNNNQNNNQNNNQNNNQNNQNNNNQNN) shows a compositional bias: low complexity. Residues 674–838 (NNQNNNNQNN…LSIPIPKIFN (165 aa)) are ear.

It belongs to the adaptor complexes large subunit family. In terms of assembly, may be part of the adaptor protein complex 4 (AP-4), a heterotetramer composed of two large adaptins (epsilon-type subunitand beta-type subunit), a medium adaptin (mu-type subunit) and a small adaptin (sigma-type).

It is found in the golgi apparatus. The protein resides in the trans-Golgi network membrane. Functionally, probable component of an adaptor protein complex. Adaptor protein complexes are vesicle coat components involved both in vesicle formation and cargo selection. They control the vesicular transport of proteins in different trafficking pathways. This chain is AP-4 complex subunit beta (ap4b1), found in Dictyostelium discoideum (Social amoeba).